We begin with the raw amino-acid sequence, 82 residues long: Small ribosomal subunit protein bS16 (82 aa).

The protein belongs to the bacterial ribosomal protein bS16 family.

The protein is Small ribosomal subunit protein bS16 of Pseudoalteromonas translucida (strain TAC 125).